Here is a 320-residue protein sequence, read N- to C-terminus: Adenosine receptor A3 (320 aa).

Topologically, residues 1–16 are extracellular; it reads MKANNTTTSALWLQIT. Residues Asn-4 and Asn-5 are each glycosylated (N-linked (GlcNAc...) asparagine). The chain crosses the membrane as a helical span at residues 17 to 39; that stretch reads YITMEAAIGLCAVVGNMLVIWVV. Residues 40 to 50 are Cytoplasmic-facing; the sequence is KLNRTLRTTTF. A helical transmembrane segment spans residues 51–74; that stretch reads YFIVSLALADIAVGVLVIPLAIAV. Residues 75-86 lie on the Extracellular side of the membrane; it reads SLEVQMHFYACL. Cys-85 and Cys-168 are disulfide-bonded. The chain crosses the membrane as a helical span at residues 87–108; that stretch reads FMSCVLLVFTHASIMSLLAIAV. Residues 109 to 128 are Cytoplasmic-facing; that stretch reads DRYLRVKLTVRYRTVTTQRR. The chain crosses the membrane as a helical span at residues 129-150; sequence IWLFLGLCWLVSFLVGLTPMFG. Residues 151 to 179 lie on the Extracellular side of the membrane; that stretch reads WNRKVTLELSQNSSTLSCHFRSVVGLDYM. A helical membrane pass occupies residues 180–200; sequence VFFSFITWILIPLVVMCIIYL. Over 201–233 the chain is Cytoplasmic; the sequence is DIFYIIRNKLSQNLTGFRETRAFYGREFKTAKS. The helical transmembrane segment at 234 to 257 threads the bilayer; the sequence is LFLVLFLFALCWLPLSIINFVSYF. Residues 258–263 lie on the Extracellular side of the membrane; that stretch reads NVKIPE. A helical transmembrane segment spans residues 264-286; that stretch reads IAMCLGILLSHANSMMNPIVYAC. Residues 287–320 lie on the Cytoplasmic side of the membrane; sequence KIKKFKETYFVILRACRLCQTSDSLDSNLEQTTE. Cys-305 carries the S-palmitoyl cysteine lipid modification. 3 positions are modified to phosphothreonine: Thr-307, Thr-318, and Thr-319.

It belongs to the G-protein coupled receptor 1 family. Phosphorylation on Thr-318 and Thr-319 may be crucial for rapid desensitization. Phosphorylation on Thr-318 may be necessary for phosphorylation on Thr-319 to occur. Testis, particularly in spermatocytes and spermatids but not in spermatogonia. Low levels in the brain.

Its subcellular location is the cell membrane. Receptor for adenosine. The activity of this receptor is mediated by G proteins which inhibits adenylyl cyclase. May play a role during reproduction. In Rattus norvegicus (Rat), this protein is Adenosine receptor A3 (Adora3).